The following is a 1219-amino-acid chain: DNA ligase 4 (1219 aa).

Residues Glu251, Lys253, Arg258, Arg273, Glu303, Phe342, Glu418, Lys423, Arg434, Lys440, and Lys442 each contribute to the ATP site. Lys253 acts as the N6-AMP-lysine intermediate in catalysis. Residue Glu303 coordinates Mg(2+). Glu418 serves as a coordination point for Mg(2+). Residues 604 to 632 (NGTTQKQKESESTQDNPKVNKSSKRGEKK) form a disordered region. BRCT domains follow at residues 651-739 (GKTS…PKYF) and 807-909 (VYFY…VYTL). 2 disordered regions span residues 914–1126 (MEES…MDMK) and 1146–1197 (IPSQ…SDVV). The span at 932-960 (VASQGSAQTKEPASSKIAITSSRGRSNTR) shows a compositional bias: polar residues. The span at 1042-1051 (QRSRRGKKAA) shows a compositional bias: basic residues. A compositionally biased stretch (acidic residues) spans 1056-1065 (DESDENDELD). Basic and acidic residues-rich tracts occupy residues 1084–1096 (VENE…DIAK) and 1117–1126 (RNAKTEMDMK). The segment covering 1148–1159 (SQKTTETSNRTT) has biased composition (polar residues).

It belongs to the ATP-dependent DNA ligase family. In terms of assembly, interacts with XRCC4 via its tandem BRCT domains. Interacts with POLL. Mg(2+) is required as a cofactor. Widely expressed, with higher levels in young flowers and roots.

It is found in the nucleus. The catalysed reaction is ATP + (deoxyribonucleotide)n-3'-hydroxyl + 5'-phospho-(deoxyribonucleotide)m = (deoxyribonucleotide)n+m + AMP + diphosphate.. Functionally, DNA ligase involved in DNA non-homologous end joining (NHEJ); required for double-strand break (DSB) repair. May be involved for T-DNA integration even if not absolutely required. Seems to be dispensable under normal growth conditions. In Arabidopsis thaliana (Mouse-ear cress), this protein is DNA ligase 4 (LIG4).